A 470-amino-acid chain; its full sequence is Pre-mycofactocin glycosyltransferase (470 aa).

Residues 315–335 (LVISGGALMAWILMSIGTGLG) form a helical membrane-spanning segment.

This sequence belongs to the glycosyltransferase 2 family.

Its subcellular location is the cell membrane. In terms of biological role, involved in the biosynthesis of the enzyme cofactor mycofactocin (MFT). Acts as a glycosyltransferase that catalyzes the oligoglycosylation of pre-mycofactocin (PMFT), adding up to nine beta-1,4-linked glucose residues. Is required for the in vivo ethanol assimilation in M.smegmatis. The polypeptide is Pre-mycofactocin glycosyltransferase (mftF) (Mycobacterium tuberculosis (strain CDC 1551 / Oshkosh)).